Reading from the N-terminus, the 132-residue chain is Small ribosomal subunit protein uS11 (132 aa).

This sequence belongs to the universal ribosomal protein uS11 family. In terms of assembly, part of the 30S ribosomal subunit. Interacts with proteins S7 and S18. Binds to IF-3.

Its function is as follows. Located on the platform of the 30S subunit, it bridges several disparate RNA helices of the 16S rRNA. Forms part of the Shine-Dalgarno cleft in the 70S ribosome. This is Small ribosomal subunit protein uS11 from Clostridioides difficile (strain 630) (Peptoclostridium difficile).